A 495-amino-acid polypeptide reads, in one-letter code: Anaerobic nitric oxide reductase flavorubredoxin (495 aa).

The tract at residues 30–210 is zinc metallo-hydrolase; the sequence is HKGTSYNSYL…PFSPLVTAKI (181 aa). 6 residues coordinate Fe cation: His-79, Glu-81, Asp-83, His-147, Asp-166, and His-227. The Flavodoxin-like domain maps to 254-393; the sequence is ITLFYDSMSN…ECREHGRQLA (140 aa). FMN is bound by residues 260–264 and 342–369; these read SMSNN and AFGS…DISI. In terms of domain architecture, Rubredoxin-like spans 438 to 489; sequence DQAMLCTVCQWVYDPAQGEPDQLVAPGTPWAQVPDSFLCPGCGIGKEVFEPC. Fe cation contacts are provided by Cys-443, Cys-446, Cys-476, and Cys-479.

It in the N-terminal section; belongs to the zinc metallo-hydrolase group 3 family. Homotetramer. Requires Fe cation as cofactor. The cofactor is FMN.

The protein resides in the cytoplasm. It participates in nitrogen metabolism; nitric oxide reduction. Its function is as follows. Anaerobic nitric oxide reductase; uses NADH to detoxify nitric oxide (NO), protecting several 4Fe-4S NO-sensitive enzymes. Has at least 2 reductase partners, only one of which (NorW, flavorubredoxin reductase) has been identified. NO probably binds to the di-iron center; electrons enter from the NorW at rubredoxin and are transferred sequentially to the FMN center and the di-iron center. Also able to function as an aerobic oxygen reductase. The protein is Anaerobic nitric oxide reductase flavorubredoxin of Aeromonas hydrophila subsp. hydrophila (strain ATCC 7966 / DSM 30187 / BCRC 13018 / CCUG 14551 / JCM 1027 / KCTC 2358 / NCIMB 9240 / NCTC 8049).